The chain runs to 876 residues: MEMKPKYDPREVEAGRYEEWVKNGYFKPSEDKSKETYTIVIPPPNVTGKLHLGHAWDTTLQDIITRMKRMQGYDTLYLPGMDHAGIATQAKVEAKLNEQGITRYDLGREKFLEQAWDWKEEYASFIRAQWAKLGLGLDYSRERFTLDEGLSKAVKKVFVDLYNKGIIYRGERIINWDPKARTALSDIEVIHEDVQGAFYHFKYPYADGEGFIEIATTRPETMLGDTAIVVNPNDERYKDVIGKTVILPIVGRELPILADEYVDIDFGSGAMKVTPAHDPNDFEIGQRHQLENIIVMDENGKMNDKAGKYEGMDRFDCRKQLVKDLKEQDLVIKIEDHVHSVGHSERSGAVVEPYLSTQWFVRMEDLAKRSLDNQKTDDRIDFYPQRFEHTFNQWMENIRDWTISRQLWWGHQIPAWYHKETGEIYVGEEAPTDIENWQQDEDVLDTWFSSALWPFSTLGWPDLESEDFKRYYPTNALVTGYDIIFFWVARMIFQGLEFTDRRPFNDVLLHGLVRAEDGRKMSKSLGNGVDPMDVIDEYGADSLRYFLATGSSPGHDLRYSTEKVESVWNFINKIWNGARFSLMNIGEDFKVEDIDLSGNLSLADKWILTRLNETIATVTDLSDKYEFGEVGRALYNFIWDDFCDWYIEMSKIPMNSNDEEQKQVTRSVLSYTLDNIMRMLHPFMPFVTEKIWQSLPHEGDTIVKASWPEVRESLIFEESKQTMQQLVEIIKSVRQSRVEVNTPLSKEIPILIQAKDKEIETTLSQNKDYLIKFCNPSTLNISTDVEIPEKAMTSVVIAGKVVLPLEGLIDMDKEISRLEKELAKLQSELDRVDKKLSNENFVSKAPEKVINEEKRKKQDYQEKYDGVKARIEQLKA.

Positions Pro44–His54 match the 'HIGH' region motif. The 'KMSKS' region motif lies at Lys520–Ser524. Lys523 contributes to the ATP binding site. Residues Leu805–Ala876 adopt a coiled-coil conformation.

Belongs to the class-I aminoacyl-tRNA synthetase family. ValS type 1 subfamily. In terms of assembly, monomer.

Its subcellular location is the cytoplasm. It catalyses the reaction tRNA(Val) + L-valine + ATP = L-valyl-tRNA(Val) + AMP + diphosphate. In terms of biological role, catalyzes the attachment of valine to tRNA(Val). As ValRS can inadvertently accommodate and process structurally similar amino acids such as threonine, to avoid such errors, it has a 'posttransfer' editing activity that hydrolyzes mischarged Thr-tRNA(Val) in a tRNA-dependent manner. This is Valine--tRNA ligase from Staphylococcus aureus (strain JH1).